Consider the following 140-residue polypeptide: uncharacterized protein (140 aa).

2 helical membrane-spanning segments follow: residues 4–21 (ILKI…YLFG) and 26–48 (LVKV…SGYL).

This sequence belongs to the bacteriophage holin family. Cp-1 holin subfamily.

It localises to the cell membrane. This is an uncharacterized protein from Listeria innocua serovar 6a (strain ATCC BAA-680 / CLIP 11262).